Consider the following 238-residue polypeptide: Cysteine-rich venom protein pseudechetoxin-like (238 aa).

The N-terminal stretch at 1 to 19 (MIAFIVLLSLAAVLQQSSG) is a signal peptide. Positions 20 to 28 (TVDFASESS) are excised as a propeptide. The SCP domain occupies 38–164 (VDKHNALRRS…STKYLYVCQY (127 aa)). 8 disulfides stabilise this stretch: C75-C153, C92-C165, C148-C162, C184-C191, C187-C196, C200-C233, C209-C227, and C218-C231. The ShKT domain occupies 200–233 (CKYEDDFSNCKALAKNSKCQTEWIKSKCPAACFC).

This sequence belongs to the CRISP family. Expressed by the venom gland.

It localises to the secreted. In terms of biological role, blocks olfactory (CNGA2) and retinal (CNGA1) CNG channel currents. Does not affect neither depolarization- nor caffeine-induced contraction of smooth muscle. This is Cysteine-rich venom protein pseudechetoxin-like from Notechis scutatus scutatus (Mainland tiger snake).